A 319-amino-acid polypeptide reads, in one-letter code: Transcription factor bHLH111 (319 aa).

The segment at 1–23 is disordered; that stretch reads MDHHHHIASRNSSTTSELPSFEP. The span at 9–18 shows a compositional bias: polar residues; it reads SRNSSTTSEL. The bHLH domain maps to 195-244; that stretch reads SEGSTLSPEKELPKAKLRDKITTLQQIVSPFGKTDTASVLQEAITYINFY.

As to quaternary structure, homodimer.

The protein resides in the nucleus. The protein is Transcription factor bHLH111 (BHLH111) of Arabidopsis thaliana (Mouse-ear cress).